Here is a 364-residue protein sequence, read N- to C-terminus: 4-hydroxy-3-methylbut-2-en-1-yl diphosphate synthase (flavodoxin) (364 aa).

[4Fe-4S] cluster-binding residues include C268, C271, C303, and E310.

Belongs to the IspG family. [4Fe-4S] cluster is required as a cofactor.

It catalyses the reaction (2E)-4-hydroxy-3-methylbut-2-enyl diphosphate + oxidized [flavodoxin] + H2O + 2 H(+) = 2-C-methyl-D-erythritol 2,4-cyclic diphosphate + reduced [flavodoxin]. Its pathway is isoprenoid biosynthesis; isopentenyl diphosphate biosynthesis via DXP pathway; isopentenyl diphosphate from 1-deoxy-D-xylulose 5-phosphate: step 5/6. Its function is as follows. Converts 2C-methyl-D-erythritol 2,4-cyclodiphosphate (ME-2,4cPP) into 1-hydroxy-2-methyl-2-(E)-butenyl 4-diphosphate. In Anoxybacillus flavithermus (strain DSM 21510 / WK1), this protein is 4-hydroxy-3-methylbut-2-en-1-yl diphosphate synthase (flavodoxin).